A 195-amino-acid chain; its full sequence is RILP-like protein 2 (195 aa).

Residues 8-92 enclose the RH1 domain; that stretch reads SPTQAFDKDV…RTETDRVVAE (85 aa). Residues 58–149 are a coiled coil; sequence LEMFETMVNK…AQEELQLYKS (92 aa). Residues 115–185 enclose the RH2 domain; the sequence is RPRFTMQELK…ITEESKEKST (71 aa).

It belongs to the RILPL family.

The protein resides in the cytoplasm. It is found in the cytosol. Its subcellular location is the cytoskeleton. The protein localises to the microtubule organizing center. It localises to the centrosome. The protein resides in the cell projection. It is found in the cilium. Functionally, involved in cell shape and neuronal morphogenesis, positively regulating the establishment and maintenance of dendritic spines. Plays a role in cellular protein transport. The polypeptide is RILP-like protein 2 (rilpl2) (Danio rerio (Zebrafish)).